Consider the following 337-residue polypeptide: Alcohol dehydrogenase (337 aa).

Positions 38, 61, 92, 95, 98, 106, and 148 each coordinate Zn(2+). Residues 172 to 177 (GIGGLG), aspartate 195, lysine 200, 260 to 262 (VGL), and arginine 331 each bind NAD(+).

Belongs to the zinc-containing alcohol dehydrogenase family. It depends on Zn(2+) as a cofactor.

It carries out the reaction a primary alcohol + NAD(+) = an aldehyde + NADH + H(+). The catalysed reaction is a secondary alcohol + NAD(+) = a ketone + NADH + H(+). With respect to regulation, substrate inhibition is not observed with any alcohols, and the enzyme-NADH dissociation is not considered to be a rate-limiting step. Its function is as follows. NAD(+)-dependent alcohol dehydrogenase. This Geobacillus stearothermophilus (Bacillus stearothermophilus) protein is Alcohol dehydrogenase (adhT).